Here is a 235-residue protein sequence, read N- to C-terminus: Voltage-gated hydrogen channel 1 (235 aa).

Residues 1 to 65 (MSRYLKHFTA…SLRKLYSTER (65 aa)) are Cytoplasmic-facing. The helical transmembrane segment at 66–86 (FQIVVVCLVVLDAIFVLCELL) threads the bilayer. Residues 87–103 (IDLSIIEADHHRIAPQV) lie on the Extracellular side of the membrane. A helical transmembrane segment spans residues 104–126 (FHYLSLALLTFFMVELAGKIFAY). Over 127-134 (RLEFLHHK) the chain is Cytoplasmic. Residues 135–155 (FEVFDGIVVVVSFILDIIYIS) traverse the membrane as a helical segment. The Extracellular segment spans residues 156–162 (KEDAFDA). Residues 163-183 (MGLLILLRLWRVARIINGILV) form a helical membrane-spanning segment. Topologically, residues 184 to 235 (SVQNRANHRVEKLKEINESLVHQVNELKEQNTKMDQENVRLRALLKDHSIDF) are cytoplasmic. Residues 187–231 (NRANHRVEKLKEINESLVHQVNELKEQNTKMDQENVRLRALLKDH) adopt a coiled-coil conformation.

This sequence belongs to the hydrogen channel family. In terms of assembly, homodimer.

It is found in the membrane. The protein localises to the cell membrane. Functionally, mediates the voltage-dependent proton permeability of excitable membranes. Forms a proton-selective channel through which protons may pass in accordance with their electrochemical gradient. This chain is Voltage-gated hydrogen channel 1 (hvcn1), found in Danio rerio (Zebrafish).